The primary structure comprises 323 residues: Fructose-1,6-bisphosphatase class 1 (323 aa).

Residues Glu-93, Asp-114, Leu-116, and Asp-117 each contribute to the Mg(2+) site. Substrate-binding positions include 117-120 (DGSS), Asn-205, Tyr-233, and Lys-263. Position 269 (Glu-269) interacts with Mg(2+).

Belongs to the FBPase class 1 family. Homotetramer. It depends on Mg(2+) as a cofactor.

The protein localises to the cytoplasm. It catalyses the reaction beta-D-fructose 1,6-bisphosphate + H2O = beta-D-fructose 6-phosphate + phosphate. It participates in carbohydrate biosynthesis; gluconeogenesis. The polypeptide is Fructose-1,6-bisphosphatase class 1 (Sulfurihydrogenibium sp. (strain YO3AOP1)).